The following is a 202-amino-acid chain: Sterile alpha motif domain-containing protein 10 (202 aa).

A disordered region spans residues 1–22 (MFTELRSKLSPPRARAGAVRPG). The SAM domain maps to 118 to 184 (WSQQDVCKWL…LQQVLHLQVR (67 aa)).

This is Sterile alpha motif domain-containing protein 10 from Mus musculus (Mouse).